The following is a 210-amino-acid chain: 7-methyl-GTP pyrophosphatase (210 aa).

Aspartate 79 acts as the Proton acceptor in catalysis.

Belongs to the Maf family. YceF subfamily. The cofactor is a divalent metal cation.

Its subcellular location is the cytoplasm. It carries out the reaction N(7)-methyl-GTP + H2O = N(7)-methyl-GMP + diphosphate + H(+). Functionally, nucleoside triphosphate pyrophosphatase that hydrolyzes 7-methyl-GTP (m(7)GTP). May have a dual role in cell division arrest and in preventing the incorporation of modified nucleotides into cellular nucleic acids. In Burkholderia lata (strain ATCC 17760 / DSM 23089 / LMG 22485 / NCIMB 9086 / R18194 / 383), this protein is 7-methyl-GTP pyrophosphatase.